A 239-amino-acid polypeptide reads, in one-letter code: ATP-dependent dethiobiotin synthetase BioD (239 aa).

Residue 15 to 20 (EIGKTF) coordinates ATP. Thr-19 provides a ligand contact to Mg(2+). Lys-40 is an active-site residue. Residues Asp-57, 118 to 121 (EGVG), 178 to 179 (NH), and 211 to 213 (AHL) each bind ATP. Residues Asp-57 and Glu-118 each contribute to the Mg(2+) site.

This sequence belongs to the dethiobiotin synthetase family. Homodimer. Mg(2+) is required as a cofactor.

It localises to the cytoplasm. It catalyses the reaction (7R,8S)-7,8-diammoniononanoate + CO2 + ATP = (4R,5S)-dethiobiotin + ADP + phosphate + 3 H(+). It participates in cofactor biosynthesis; biotin biosynthesis; biotin from 7,8-diaminononanoate: step 1/2. In terms of biological role, catalyzes a mechanistically unusual reaction, the ATP-dependent insertion of CO2 between the N7 and N8 nitrogen atoms of 7,8-diaminopelargonic acid (DAPA, also called 7,8-diammoniononanoate) to form a ureido ring. The chain is ATP-dependent dethiobiotin synthetase BioD from Burkholderia ambifaria (strain MC40-6).